We begin with the raw amino-acid sequence, 873 residues long: DNA mismatch repair protein MutS (873 aa).

ATP is bound at residue 625–632 (GPNMGGKS).

It belongs to the DNA mismatch repair MutS family.

In terms of biological role, this protein is involved in the repair of mismatches in DNA. It is possible that it carries out the mismatch recognition step. This protein has a weak ATPase activity. The sequence is that of DNA mismatch repair protein MutS from Xanthomonas campestris pv. campestris (strain 8004).